A 362-amino-acid chain; its full sequence is tRNA 2-selenouridine synthase (362 aa).

The Rhodanese domain maps to 14 to 137; the sequence is LANETPIIDV…LRQATIEMTN (124 aa). Cys-97 acts as the S-selanylcysteine intermediate in catalysis.

Belongs to the SelU family. As to quaternary structure, monomer.

It catalyses the reaction 5-methylaminomethyl-2-thiouridine(34) in tRNA + selenophosphate + (2E)-geranyl diphosphate + H2O + H(+) = 5-methylaminomethyl-2-selenouridine(34) in tRNA + (2E)-thiogeraniol + phosphate + diphosphate. The enzyme catalyses 5-methylaminomethyl-2-thiouridine(34) in tRNA + (2E)-geranyl diphosphate = 5-methylaminomethyl-S-(2E)-geranyl-thiouridine(34) in tRNA + diphosphate. The catalysed reaction is 5-methylaminomethyl-S-(2E)-geranyl-thiouridine(34) in tRNA + selenophosphate + H(+) = 5-methylaminomethyl-2-(Se-phospho)selenouridine(34) in tRNA + (2E)-thiogeraniol. It carries out the reaction 5-methylaminomethyl-2-(Se-phospho)selenouridine(34) in tRNA + H2O = 5-methylaminomethyl-2-selenouridine(34) in tRNA + phosphate. In terms of biological role, involved in the post-transcriptional modification of the uridine at the wobble position (U34) of tRNA(Lys), tRNA(Glu) and tRNA(Gln). Catalyzes the conversion of 2-thiouridine (S2U-RNA) to 2-selenouridine (Se2U-RNA). Acts in a two-step process involving geranylation of 2-thiouridine (S2U) to S-geranyl-2-thiouridine (geS2U) and subsequent selenation of the latter derivative to 2-selenouridine (Se2U) in the tRNA chain. This is tRNA 2-selenouridine synthase from Proteus mirabilis (strain HI4320).